The sequence spans 169 residues: Transcription antitermination protein NusB (169 aa).

The tract at residues 1 to 20 (MAESSNKPFRGPVRANDRKA) is disordered.

This sequence belongs to the NusB family.

In terms of biological role, involved in transcription antitermination. Required for transcription of ribosomal RNA (rRNA) genes. Binds specifically to the boxA antiterminator sequence of the ribosomal RNA (rrn) operons. The sequence is that of Transcription antitermination protein NusB from Bradyrhizobium sp. (strain BTAi1 / ATCC BAA-1182).